Consider the following 203-residue polypeptide: Guanylate kinase (203 aa).

The region spanning 5 to 184 (GMLIVLSGPS…AVQRIEKIIE (180 aa)) is the Guanylate kinase-like domain. 12 to 19 (GPSGVGKG) is an ATP binding site.

It belongs to the guanylate kinase family.

It is found in the cytoplasm. The enzyme catalyses GMP + ATP = GDP + ADP. Essential for recycling GMP and indirectly, cGMP. This chain is Guanylate kinase, found in Latilactobacillus sakei subsp. sakei (strain 23K) (Lactobacillus sakei subsp. sakei).